The chain runs to 158 residues: Phosphopantetheine adenylyltransferase (158 aa).

Thr-8 lines the substrate pocket. Residues 8-9 and His-16 each bind ATP; that span reads TF. Substrate-binding residues include Lys-40, Leu-72, and Arg-86. Residues 87–89, Glu-97, and 122–128 each bind ATP; these read GLR and HAFISSS.

The protein belongs to the bacterial CoaD family. As to quaternary structure, homohexamer. The cofactor is Mg(2+).

The protein localises to the cytoplasm. It catalyses the reaction (R)-4'-phosphopantetheine + ATP + H(+) = 3'-dephospho-CoA + diphosphate. It functions in the pathway cofactor biosynthesis; coenzyme A biosynthesis; CoA from (R)-pantothenate: step 4/5. In terms of biological role, reversibly transfers an adenylyl group from ATP to 4'-phosphopantetheine, yielding dephospho-CoA (dPCoA) and pyrophosphate. This Campylobacter jejuni subsp. jejuni serotype O:6 (strain 81116 / NCTC 11828) protein is Phosphopantetheine adenylyltransferase.